A 141-amino-acid chain; its full sequence is Nucleoside diphosphate kinase (141 aa).

ATP is bound by residues Lys-11, Phe-59, Arg-87, Thr-93, Arg-104, and Asn-114. The active-site Pros-phosphohistidine intermediate is the His-117.

Belongs to the NDK family. Requires Mg(2+) as cofactor.

It localises to the cytoplasm. The catalysed reaction is a 2'-deoxyribonucleoside 5'-diphosphate + ATP = a 2'-deoxyribonucleoside 5'-triphosphate + ADP. It carries out the reaction a ribonucleoside 5'-diphosphate + ATP = a ribonucleoside 5'-triphosphate + ADP. In terms of biological role, major role in the synthesis of nucleoside triphosphates other than ATP. The ATP gamma phosphate is transferred to the NDP beta phosphate via a ping-pong mechanism, using a phosphorylated active-site intermediate. This chain is Nucleoside diphosphate kinase, found in Staphylothermus marinus (strain ATCC 43588 / DSM 3639 / JCM 9404 / F1).